The chain runs to 161 residues: Troponin C, slow skeletal and cardiac muscles (161 aa).

N-acetylmethionine is present on methionine 1. 4 consecutive EF-hand domains span residues 16 to 51 (QKNE…LGQN), 52 to 87 (PTPE…CMKD), 92 to 127 (KSEE…TGET), and 128 to 161 (ITED…KGVE). Residues aspartate 65, aspartate 67, serine 69, threonine 71, and glutamate 76 each contribute to the Ca(2+) site. Position 98 is a phosphoserine (serine 98). 10 residues coordinate Ca(2+): aspartate 105, asparagine 107, aspartate 109, tyrosine 111, glutamate 116, aspartate 141, asparagine 143, aspartate 145, arginine 147, and glutamate 152.

This sequence belongs to the troponin C family.

In terms of biological role, troponin is the central regulatory protein of striated muscle contraction. Tn consists of three components: Tn-I which is the inhibitor of actomyosin ATPase, Tn-T which contains the binding site for tropomyosin and Tn-C. The binding of calcium to Tn-C abolishes the inhibitory action of Tn on actin filaments. The chain is Troponin C, slow skeletal and cardiac muscles (TNNC1) from Bos taurus (Bovine).